We begin with the raw amino-acid sequence, 93 residues long: Regulatory protein RepI (93 aa).

Functionally, this protein is involved in regulating the plasmid copy-number. Increasing the level of this protein results in a higher plasmid copy-number. This is Regulatory protein RepI (repI) from Escherichia coli.